A 185-amino-acid polypeptide reads, in one-letter code: Peptidyl-tRNA hydrolase (185 aa).

Position 14 (Y14) interacts with tRNA. Residue H19 is the Proton acceptor of the active site. TRNA contacts are provided by F64, N66, and N112.

The protein belongs to the PTH family. In terms of assembly, monomer.

It localises to the cytoplasm. The catalysed reaction is an N-acyl-L-alpha-aminoacyl-tRNA + H2O = an N-acyl-L-amino acid + a tRNA + H(+). In terms of biological role, hydrolyzes ribosome-free peptidyl-tRNAs (with 1 or more amino acids incorporated), which drop off the ribosome during protein synthesis, or as a result of ribosome stalling. Its function is as follows. Catalyzes the release of premature peptidyl moieties from peptidyl-tRNA molecules trapped in stalled 50S ribosomal subunits, and thus maintains levels of free tRNAs and 50S ribosomes. The protein is Peptidyl-tRNA hydrolase of Caldanaerobacter subterraneus subsp. tengcongensis (strain DSM 15242 / JCM 11007 / NBRC 100824 / MB4) (Thermoanaerobacter tengcongensis).